Reading from the N-terminus, the 287-residue chain is 2-dehydro-3-deoxyphosphooctonate aldolase (287 aa).

It belongs to the KdsA family.

The protein resides in the cytoplasm. The catalysed reaction is D-arabinose 5-phosphate + phosphoenolpyruvate + H2O = 3-deoxy-alpha-D-manno-2-octulosonate-8-phosphate + phosphate. Its pathway is carbohydrate biosynthesis; 3-deoxy-D-manno-octulosonate biosynthesis; 3-deoxy-D-manno-octulosonate from D-ribulose 5-phosphate: step 2/3. It functions in the pathway bacterial outer membrane biogenesis; lipopolysaccharide biosynthesis. The sequence is that of 2-dehydro-3-deoxyphosphooctonate aldolase from Nitrobacter winogradskyi (strain ATCC 25391 / DSM 10237 / CIP 104748 / NCIMB 11846 / Nb-255).